Consider the following 340-residue polypeptide: Nicotianamine synthase 9 (340 aa).

Belongs to the nicotianamine synthase (NAS)-like family. In terms of assembly, homotrimer.

The enzyme catalyses 3 S-adenosyl-L-methionine = nicotianamine + 3 S-methyl-5'-thioadenosine + 3 H(+). Synthesizes nicotianamine, a polyamine that is the first intermediate in the synthesis of the phytosiderophores of the mugineic acid type found in gramineae which serves as a sensor for the physiological iron status within the plant, and/or might be involved in the transport of iron. The protein is Nicotianamine synthase 9 (NAS9) of Hordeum vulgare (Barley).